The following is a 692-amino-acid chain: NAD(P)H-quinone oxidoreductase subunit 5, chloroplastic (692 aa).

17 helical membrane passes run 9–29 (WFVPLFPFLASILLGIGLFFF), 39–59 (LSSFISIMFLNIAMLLSFHFF), 89–109 (LDPLTSIMLVLVTTVAVMVMI), 120–140 (GYIKFFCYLSLFTASMLGLVL), 147–167 (VYIFWELVGMCSYLLIGFWFT), 184–204 (IGDFGLLLGILGFYWITGSFD), 219–239 (NQINLVFATLCALFLFLGPVA), 258–278 (TPISALIHAATMVAAGIFLVA), 289–309 (FVMSIISWTGAITALLGATIA), 327–347 (LGYMMLALGIGSYKAGLFHLI), 354–374 (ALLFLGSGSVIHSMEPIVGYH), 395–415 (AITFLFGTLSLCGIPPFACFW), 425–445 (WLHFPILGSIAFFTAGLTAFY), 503–523 (LFPLIILTIPTVFIGFIGILF), 555–575 (FLFNAIPSVSIAFFGILIAFY), 643–663 (WIIDGIINGIGIFSFFGGESL), and 671–691 (ISSYLFFIIFCMFLFFLYSYI).

This sequence belongs to the complex I subunit 5 family. NDH is composed of at least 16 different subunits, 5 of which are encoded in the nucleus.

The protein resides in the plastid. It localises to the chloroplast thylakoid membrane. It catalyses the reaction a plastoquinone + NADH + (n+1) H(+)(in) = a plastoquinol + NAD(+) + n H(+)(out). The catalysed reaction is a plastoquinone + NADPH + (n+1) H(+)(in) = a plastoquinol + NADP(+) + n H(+)(out). NDH shuttles electrons from NAD(P)H:plastoquinone, via FMN and iron-sulfur (Fe-S) centers, to quinones in the photosynthetic chain and possibly in a chloroplast respiratory chain. The immediate electron acceptor for the enzyme in this species is believed to be plastoquinone. Couples the redox reaction to proton translocation, and thus conserves the redox energy in a proton gradient. The sequence is that of NAD(P)H-quinone oxidoreductase subunit 5, chloroplastic (ndhF) from Marchantia polymorpha (Common liverwort).